Here is a 281-residue protein sequence, read N- to C-terminus: CLA biosynthesis isomerase (281 aa).

Belongs to the ADC family.

Its subcellular location is the cytoplasm. The catalysed reaction is 10-oxo-(12Z)-octadecenoate = 10-oxo-(11E)-octadecenoate. It participates in lipid metabolism; fatty acid metabolism. Is involved in a saturation metabolic pathway of polyunsaturated fatty acids, that detoxifies unsaturated fatty acids and generates hydroxy fatty acids, oxo fatty acids, conjugated fatty acids such as conjugated linoleic acids (CLAs), and partially saturated trans-fatty acids as intermediates. CLA-DC catalyzes the migration of the carbon-carbon double bond in 10-oxo-(12Z)-octadecenoate to produce 10-oxo-(11E)-octadecenoate, during linoleate metabolism. As part of the gut microbiome, this enzyme modifies host fatty acid composition and is expected to improve human health by altering lipid metabolism related to the onset of metabolic syndrome. The sequence is that of CLA biosynthesis isomerase from Lactiplantibacillus plantarum (Lactobacillus plantarum).